Here is a 599-residue protein sequence, read N- to C-terminus: Elongation factor 4 (599 aa).

Residues 4–186 (ENIRNFSIIA…EIVTKIPPPQ (183 aa)) enclose the tr-type G domain. Residues 16–21 (DHGKST) and 133–136 (NKID) each bind GTP.

This sequence belongs to the TRAFAC class translation factor GTPase superfamily. Classic translation factor GTPase family. LepA subfamily.

It localises to the cell inner membrane. It carries out the reaction GTP + H2O = GDP + phosphate + H(+). Required for accurate and efficient protein synthesis under certain stress conditions. May act as a fidelity factor of the translation reaction, by catalyzing a one-codon backward translocation of tRNAs on improperly translocated ribosomes. Back-translocation proceeds from a post-translocation (POST) complex to a pre-translocation (PRE) complex, thus giving elongation factor G a second chance to translocate the tRNAs correctly. Binds to ribosomes in a GTP-dependent manner. This is Elongation factor 4 from Geotalea uraniireducens (strain Rf4) (Geobacter uraniireducens).